We begin with the raw amino-acid sequence, 429 residues long: Histidine--tRNA ligase (429 aa).

Belongs to the class-II aminoacyl-tRNA synthetase family. As to quaternary structure, homodimer.

The protein resides in the cytoplasm. It catalyses the reaction tRNA(His) + L-histidine + ATP = L-histidyl-tRNA(His) + AMP + diphosphate + H(+). The chain is Histidine--tRNA ligase from Escherichia fergusonii (strain ATCC 35469 / DSM 13698 / CCUG 18766 / IAM 14443 / JCM 21226 / LMG 7866 / NBRC 102419 / NCTC 12128 / CDC 0568-73).